The chain runs to 100 residues: Urease subunit gamma (100 aa).

This sequence belongs to the urease gamma subunit family. In terms of assembly, heterotrimer of UreA (gamma), UreB (beta) and UreC (alpha) subunits. Three heterotrimers associate to form the active enzyme.

The protein localises to the cytoplasm. The catalysed reaction is urea + 2 H2O + H(+) = hydrogencarbonate + 2 NH4(+). It functions in the pathway nitrogen metabolism; urea degradation; CO(2) and NH(3) from urea (urease route): step 1/1. This is Urease subunit gamma from Rhodopseudomonas palustris (strain BisB5).